A 281-amino-acid polypeptide reads, in one-letter code: Ribosomal RNA small subunit methyltransferase A (281 aa).

Residues histidine 25, leucine 27, glycine 52, glutamate 74, aspartate 100, and asparagine 119 each coordinate S-adenosyl-L-methionine.

It belongs to the class I-like SAM-binding methyltransferase superfamily. rRNA adenine N(6)-methyltransferase family. RsmA subfamily.

It is found in the cytoplasm. The catalysed reaction is adenosine(1518)/adenosine(1519) in 16S rRNA + 4 S-adenosyl-L-methionine = N(6)-dimethyladenosine(1518)/N(6)-dimethyladenosine(1519) in 16S rRNA + 4 S-adenosyl-L-homocysteine + 4 H(+). Its function is as follows. Specifically dimethylates two adjacent adenosines (A1518 and A1519) in the loop of a conserved hairpin near the 3'-end of 16S rRNA in the 30S particle. May play a critical role in biogenesis of 30S subunits. The chain is Ribosomal RNA small subunit methyltransferase A from Paramagnetospirillum magneticum (strain ATCC 700264 / AMB-1) (Magnetospirillum magneticum).